Here is a 1974-residue protein sequence, read N- to C-terminus: Protein Ycf2 (1974 aa).

Residues 219–246 are disordered; the sequence is SQLKGSSYQSRDHLDSISNEDSEYHNQR. Residue 1308–1315 coordinates ATP; that stretch reads GSIGTGRS.

The protein belongs to the Ycf2 family.

It is found in the plastid. The protein localises to the chloroplast stroma. In terms of biological role, probable ATPase of unknown function. Its presence in a non-photosynthetic plant (Epifagus virginiana) and experiments in tobacco indicate that it has an essential function which is probably not related to photosynthesis. The chain is Protein Ycf2 from Jasminum nudiflorum (Winter jasmine).